The sequence spans 234 residues: 2-C-methyl-D-erythritol 4-phosphate cytidylyltransferase (234 aa).

The protein belongs to the IspD/TarI cytidylyltransferase family. IspD subfamily.

The enzyme catalyses 2-C-methyl-D-erythritol 4-phosphate + CTP + H(+) = 4-CDP-2-C-methyl-D-erythritol + diphosphate. It functions in the pathway isoprenoid biosynthesis; isopentenyl diphosphate biosynthesis via DXP pathway; isopentenyl diphosphate from 1-deoxy-D-xylulose 5-phosphate: step 2/6. Functionally, catalyzes the formation of 4-diphosphocytidyl-2-C-methyl-D-erythritol from CTP and 2-C-methyl-D-erythritol 4-phosphate (MEP). This Desulforamulus reducens (strain ATCC BAA-1160 / DSM 100696 / MI-1) (Desulfotomaculum reducens) protein is 2-C-methyl-D-erythritol 4-phosphate cytidylyltransferase.